Reading from the N-terminus, the 476-residue chain is UDP-N-acetylmuramate--L-alanine ligase (476 aa).

126–132 (GAHGKTT) lines the ATP pocket.

Belongs to the MurCDEF family.

It localises to the cytoplasm. It carries out the reaction UDP-N-acetyl-alpha-D-muramate + L-alanine + ATP = UDP-N-acetyl-alpha-D-muramoyl-L-alanine + ADP + phosphate + H(+). Its pathway is cell wall biogenesis; peptidoglycan biosynthesis. Cell wall formation. The protein is UDP-N-acetylmuramate--L-alanine ligase of Psychrobacter sp. (strain PRwf-1).